The following is a 222-amino-acid chain: MNELKHLAVVMDGNRRWARAKGFLAKLGYSQGVKTMQKLMEVCMEENISNLSLFAFSTENWKRPKDEIDFIFELLDRCLDEALEKFEKNNVRLRAIGDLSRLEDKVREKITLVEEKTKHCDALCVNLAISYGARDEIIRAAKRVIEKKLELNEENLTQNLDLPLDVDLMLRVGNAKRLSNFLLWQCSYAEIYFSETLFPSLTKREFKRIIKEFRNRERTFGK.

The active site involves aspartate 12. Aspartate 12 contacts Mg(2+). Substrate contacts are provided by residues 13–16 (GNRR), tryptophan 17, and 57–59 (STE). Catalysis depends on asparagine 60, which acts as the Proton acceptor. Substrate is bound by residues tryptophan 61, arginine 63, arginine 171, and 177 to 179 (RLS). Glutamate 190 provides a ligand contact to Mg(2+).

This sequence belongs to the UPP synthase family. In terms of assembly, homodimer. It depends on Mg(2+) as a cofactor.

In terms of biological role, catalyzes the condensation of isopentenyl diphosphate (IPP) with allylic pyrophosphates generating different type of terpenoids. The polypeptide is Isoprenyl transferase (uppS) (Campylobacter jejuni subsp. jejuni serotype O:2 (strain ATCC 700819 / NCTC 11168)).